We begin with the raw amino-acid sequence, 374 residues long: Homeobox protein knotted-1-like 13 (374 aa).

Residues 214-242 (TGASPGEGTGATMSDGEDDQADSEANMYD) are disordered. The ELK domain occupies 270 to 290 (ELKHELKQGYKEKLIDIREEI). A DNA-binding region (homeobox; TALE-type) is located at residues 291–354 (LRKRRAGKLP…NQRKRNWHSN (64 aa)). A disordered region spans residues 347–374 (RKRNWHSNPSSSTSVKTKRKSNAGDNNS).

This sequence belongs to the TALE/KNOX homeobox family. Isoforms 1 and 2 are expressed in roots, stems, shoot meristem, leaf blades, leaf sheaths and flowers. Isoform 3 is expressed in stems, shoot meristem, rachis, leaf blades and leaf sheaths.

It localises to the nucleus. Functionally, isoform 3 acts as a transcription activator, but isoforms 1 and 2 do not. This Oryza sativa subsp. japonica (Rice) protein is Homeobox protein knotted-1-like 13 (OSH45).